We begin with the raw amino-acid sequence, 20 residues long: Cupiennin-6f (20 aa).

Expressed by the venom gland.

The protein localises to the secreted. This Cupiennius salei (American wandering spider) protein is Cupiennin-6f.